We begin with the raw amino-acid sequence, 1004 residues long: 2-oxoglutarate dehydrogenase E1 component (1004 aa).

This sequence belongs to the alpha-ketoglutarate dehydrogenase family. In terms of assembly, homodimer. Part of the 2-oxoglutarate dehydrogenase (OGDH) complex composed of E1 (2-oxoglutarate dehydrogenase), E2 (dihydrolipoamide succinyltransferase) and E3 (dihydrolipoamide dehydrogenase); the complex contains multiple copies of the three enzymatic components (E1, E2 and E3). It depends on thiamine diphosphate as a cofactor.

The catalysed reaction is N(6)-[(R)-lipoyl]-L-lysyl-[protein] + 2-oxoglutarate + H(+) = N(6)-[(R)-S(8)-succinyldihydrolipoyl]-L-lysyl-[protein] + CO2. Functionally, E1 component of the 2-oxoglutarate dehydrogenase (OGDH) complex which catalyzes the decarboxylation of 2-oxoglutarate, the first step in the conversion of 2-oxoglutarate to succinyl-CoA and CO(2). This is 2-oxoglutarate dehydrogenase E1 component from Brucella canis (strain ATCC 23365 / NCTC 10854 / RM-666).